A 471-amino-acid polypeptide reads, in one-letter code: Glutamate--tRNA ligase (471 aa).

The 'HIGH' region signature appears at Pro9–Gly19. Residues Cys98, Cys100, Cys125, and His127 each coordinate Zn(2+). The 'KMSKS' region signature appears at Lys237–Arg241. Lys240 serves as a coordination point for ATP.

Belongs to the class-I aminoacyl-tRNA synthetase family. Glutamate--tRNA ligase type 1 subfamily. Monomer. Zn(2+) is required as a cofactor.

The protein resides in the cytoplasm. It carries out the reaction tRNA(Glu) + L-glutamate + ATP = L-glutamyl-tRNA(Glu) + AMP + diphosphate. In terms of biological role, catalyzes the attachment of glutamate to tRNA(Glu) in a two-step reaction: glutamate is first activated by ATP to form Glu-AMP and then transferred to the acceptor end of tRNA(Glu). The sequence is that of Glutamate--tRNA ligase from Salmonella paratyphi A (strain ATCC 9150 / SARB42).